A 782-amino-acid polypeptide reads, in one-letter code: Protein bicaudal D (782 aa).

The stretch at 15 to 77 (VQDLQMEVER…RHELDITQEA (63 aa)) forms a coiled coil. A Phosphoserine modification is found at serine 103. The stretch at 107–249 (ETSLNLQIFD…LETLQGEREA (143 aa)) forms a coiled coil. Phosphoserine occurs at positions 285, 288, and 305. Threonine 306 is modified (phosphothreonine). Serine 310 carries the post-translational modification Phosphoserine. 2 coiled-coil regions span residues 320-368 (SEIH…FMSR) and 444-477 (TTTLRNEVTNLKNKLLATEQKSLDLQSDVQTLTH). Phosphoserine is present on serine 528. Coiled-coil stretches lie at residues 603 to 630 (EKVNTEEMEELQEQIVKLKSLLSVKREQ) and 695 to 743 (CEEY…MEMD). An interaction with Rab6 region spans residues 699 to 722 (VTQVDDLNRQLEAAEEEKKTLNQL). The disordered stretch occupies residues 744-782 (REMRHVRRPMPAQRGTSGKSSFSTRPSSRNPASSNANPF). The segment covering 757 to 767 (RGTSGKSSFST) has biased composition (polar residues). Residues 768–782 (RPSSRNPASSNANPF) show a composition bias toward low complexity.

This sequence belongs to the BicD family. As to quaternary structure, may homodimerize but does not interact with BicDR. Interacts (via C-terminal domain) with Rab6. In terms of tissue distribution, in ovaries, expressed in oocyte and nurse cells.

It localises to the cytoplasm. It is found in the cytoskeleton. Functionally, this protein is essential for differentiation. It may play a role in localizing of Nanos (a maternal determinant) activity in oocytes. Functions redundantly with BicDR. During oogenesis, plays a specific role, together with Rab6 but independently of Sec5, in the polarization of the oocyte microtubule cytoskeleton, in oskar mRNA localization and in the anterodorsal secretion of grk. Plays a role in the biogenesis of annulate lamellae containing nuclear pore complex components. During macrochaetae development, together with BicDR, involved in Rab 6 and Spn-F stability and distribution and actin cytoskeleton organization. The protein is Protein bicaudal D of Drosophila melanogaster (Fruit fly).